We begin with the raw amino-acid sequence, 279 residues long: Probable endonuclease 4 (279 aa).

9 residues coordinate Zn(2+): histidine 67, histidine 107, glutamate 144, aspartate 177, histidine 180, histidine 214, aspartate 227, histidine 229, and glutamate 259.

Belongs to the AP endonuclease 2 family. It depends on Zn(2+) as a cofactor.

It carries out the reaction Endonucleolytic cleavage to 5'-phosphooligonucleotide end-products.. Functionally, endonuclease IV plays a role in DNA repair. It cleaves phosphodiester bonds at apurinic or apyrimidinic (AP) sites, generating a 3'-hydroxyl group and a 5'-terminal sugar phosphate. In Sulfurihydrogenibium sp. (strain YO3AOP1), this protein is Probable endonuclease 4.